The chain runs to 333 residues: Holliday junction branch migration complex subunit RuvB (333 aa).

The segment at 1–182 is large ATPase domain (RuvB-L); the sequence is MDERLLSGES…FGVLSRLEYY (182 aa). ATP is bound by residues Leu-21, Arg-22, Gly-63, Lys-66, Thr-67, Thr-68, 129 to 131, Arg-172, Tyr-182, and Arg-219; that span reads EDF. Residue Thr-67 coordinates Mg(2+). A small ATPAse domain (RuvB-S) region spans residues 183 to 253; sequence TVDQLSAIVE…ITQMALELLQ (71 aa). The segment at 256–333 is head domain (RuvB-H); the sequence is KLGLDHIDHK…EHFGMEIPKV (78 aa). Positions 311 and 316 each coordinate DNA.

The protein belongs to the RuvB family. In terms of assembly, homohexamer. Forms an RuvA(8)-RuvB(12)-Holliday junction (HJ) complex. HJ DNA is sandwiched between 2 RuvA tetramers; dsDNA enters through RuvA and exits via RuvB. An RuvB hexamer assembles on each DNA strand where it exits the tetramer. Each RuvB hexamer is contacted by two RuvA subunits (via domain III) on 2 adjacent RuvB subunits; this complex drives branch migration. In the full resolvosome a probable DNA-RuvA(4)-RuvB(12)-RuvC(2) complex forms which resolves the HJ.

Its subcellular location is the cytoplasm. The enzyme catalyses ATP + H2O = ADP + phosphate + H(+). In terms of biological role, the RuvA-RuvB-RuvC complex processes Holliday junction (HJ) DNA during genetic recombination and DNA repair, while the RuvA-RuvB complex plays an important role in the rescue of blocked DNA replication forks via replication fork reversal (RFR). RuvA specifically binds to HJ cruciform DNA, conferring on it an open structure. The RuvB hexamer acts as an ATP-dependent pump, pulling dsDNA into and through the RuvAB complex. RuvB forms 2 homohexamers on either side of HJ DNA bound by 1 or 2 RuvA tetramers; 4 subunits per hexamer contact DNA at a time. Coordinated motions by a converter formed by DNA-disengaged RuvB subunits stimulates ATP hydrolysis and nucleotide exchange. Immobilization of the converter enables RuvB to convert the ATP-contained energy into a lever motion, pulling 2 nucleotides of DNA out of the RuvA tetramer per ATP hydrolyzed, thus driving DNA branch migration. The RuvB motors rotate together with the DNA substrate, which together with the progressing nucleotide cycle form the mechanistic basis for DNA recombination by continuous HJ branch migration. Branch migration allows RuvC to scan DNA until it finds its consensus sequence, where it cleaves and resolves cruciform DNA. The polypeptide is Holliday junction branch migration complex subunit RuvB (Bacillus cereus (strain G9842)).